The following is a 115-amino-acid chain: Replication initiation control protein YabA (115 aa).

His86, Cys88, Cys102, and Cys105 together coordinate Zn(2+).

The protein belongs to the YabA family. In terms of assembly, homotetramer. Interacts with both DnaA and DnaN, acting as a bridge between these two proteins. It depends on Zn(2+) as a cofactor.

The protein resides in the cytoplasm. The protein localises to the nucleoid. Functionally, involved in control of chromosome replication initiation. Inhibits the cooperative binding of DnaA to the oriC region, thus negatively regulating initiation of chromosome replication. Inhibits the ability of DnaA-ATP to form a helix on DNA; does not disassemble preformed DnaA-DNA helices. Decreases the residence time of DnaA on the chromosome at its binding sites (oriC, replication forks and promoter-binding sites). Tethers DnaA to the replication machinery via the DNA polymerase beta sliding clamp subunit (dnaN). Associates with oriC and other DnaA targets on the chromosome in a DnaA-dependent manner. The polypeptide is Replication initiation control protein YabA (Enterococcus faecalis (strain ATCC 700802 / V583)).